A 1037-amino-acid polypeptide reads, in one-letter code: Multidrug resistance protein MdtF (1037 aa).

Residues 1-9 (MANYFIDRP) lie on the Cytoplasmic side of the membrane. The chain crosses the membrane as a helical span at residues 10–30 (VFAWVLAIIMMLAGGLAIMNL). The Periplasmic portion of the chain corresponds to 31 to 338 (PVAQYPQIAP…TTPFIEISIQ (308 aa)). A helical membrane pass occupies residues 339–359 (EVFKTLVEAIILVFLVMYLFL). Residues 360–369 (QNFRATIIPT) are Cytoplasmic-facing. Residues 370–390 (IAVPVVILGTFAILSAVGFTI) traverse the membrane as a helical segment. Residues 391 to 392 (NT) are Periplasmic-facing. Residues 393–413 (LTMFGMVLAIGLLVDDAIVVV) form a helical membrane-spanning segment. Topologically, residues 414–441 (ENVERVIAEDKLPPKEATHKSMGQIQRA) are cytoplasmic. Residues 442–462 (LVGIAVVLSAVFMPMAFMSGA) traverse the membrane as a helical segment. The Periplasmic segment spans residues 463–471 (TGEIYRQFS). A helical transmembrane segment spans residues 472-492 (ITLISSMLLSVFVAMSLTPAL). The Cytoplasmic segment spans residues 493-534 (CATILKAAPEGGHKPNALFARFNTLFEKSTQHYTDSTRSLLR). A helical transmembrane segment spans residues 535–555 (CTGRYMVIYLLICAGMAVLFL). Residues 556–870 (RTPTSFLPEE…SYQEALSSNQ (315 aa)) lie on the Periplasmic side of the membrane. Residues 871 to 891 (APALYAISLVVVFLALAALYE) traverse the membrane as a helical segment. Residue serine 892 is a topological domain, cytoplasmic. The chain crosses the membrane as a helical span at residues 893–913 (WSIPFSVMLVVPLGVVGALLA). Topologically, residues 914–927 (TDLRGLSNDVYFQV) are periplasmic. The chain crosses the membrane as a helical span at residues 928–948 (GLLTTIGLSAKNAILIVEFAV). Residues 949-972 (EMMQKEGKTPIEAIIEAARMRLRP) are Cytoplasmic-facing. The helical transmembrane segment at 973–993 (ILMTSLAFILGVLPLVISHGA) threads the bilayer. Topologically, residues 994-1006 (GSGAQNAVGTGVM) are periplasmic. A helical membrane pass occupies residues 1007-1027 (GGMFAATVLAIYFVPVFFVVV). At 1028-1037 (EHLFARFKKA) the chain is on the cytoplasmic side.

Belongs to the resistance-nodulation-cell division (RND) (TC 2.A.6) family. Homotrimer. Part of the tripartite efflux system MdtEF-TolC, which is composed of an inner membrane transporter, MdtF, a membrane fusion protein, MdtE, and an outer membrane component, TolC. The complex forms a large protein conduit and can translocate molecules across both the inner and outer membranes.

It localises to the cell inner membrane. Part of the tripartite efflux system MdtEF-TolC, which confers resistance to various compounds. The sequence is that of Multidrug resistance protein MdtF (mdtF) from Escherichia coli O157:H7.